Here is a 1005-residue protein sequence, read N- to C-terminus: Protein TIC 214 (1005 aa).

The next 6 membrane-spanning stretches (helical) occupy residues 25-45, 67-87, 91-111, 131-151, 177-197, and 304-324; these read VGLY…LFLL, FFTG…HLAL, HTIL…SNSG, SFQL…SVLG, FVGW…VFVW, and LFSI…PLLY. Disordered stretches follow at residues 457–481 and 767–833; these read VEEG…EREE and KKKK…KRKQ. The span at 783–810 shows a compositional bias: basic residues; sequence KQKKVKSKQKKVKSKQKKVKSKQKKVKS. Residues 811 to 824 show a composition bias toward basic and acidic residues; sequence KQNEIKSKQNEIKS.

It belongs to the TIC214 family. In terms of assembly, part of the Tic complex.

The protein localises to the plastid. It localises to the chloroplast inner membrane. Its function is as follows. Involved in protein precursor import into chloroplasts. May be part of an intermediate translocation complex acting as a protein-conducting channel at the inner envelope. This chain is Protein TIC 214, found in Oenothera berteroana (Bertero's evening primrose).